The sequence spans 644 residues: Macrolide export ATP-binding/permease protein MacB (644 aa).

The region spanning 7-245 (IELQDITRSF…IPETDQNGRR (239 aa)) is the ABC transporter domain. 43-50 (GPSGSGKS) contacts ATP. 4 consecutive transmembrane segments (helical) span residues 271-291 (ALTL…LAIG), 526-546 (IAAI…LVSV), 570-590 (FLTE…VIGI), and 607-627 (LLPM…FGFL).

It belongs to the ABC transporter superfamily. Macrolide exporter (TC 3.A.1.122) family. In terms of assembly, homodimer. Part of the tripartite efflux system MacAB-TolC, which is composed of an inner membrane transporter, MacB, a periplasmic membrane fusion protein, MacA, and an outer membrane component, TolC. The complex forms a large protein conduit and can translocate molecules across both the inner and outer membranes. Interacts with MacA.

The protein resides in the cell inner membrane. Part of the tripartite efflux system MacAB-TolC. MacB is a non-canonical ABC transporter that contains transmembrane domains (TMD), which form a pore in the inner membrane, and an ATP-binding domain (NBD), which is responsible for energy generation. Confers resistance against macrolides. This is Macrolide export ATP-binding/permease protein MacB from Marinobacter nauticus (strain ATCC 700491 / DSM 11845 / VT8) (Marinobacter aquaeolei).